We begin with the raw amino-acid sequence, 72 residues long: Prokaryotic ubiquitin-like protein Pup (72 aa).

Over residues 1–10 (MATRDSGGGQ) the composition is skewed to gly residues. The tract at residues 1 to 41 (MATRDSGGGQQHTNRHADEVEEVAAEGNDASDLKERHEKLS) is disordered. The stretch at 21 to 61 (EEVAAEGNDASDLKERHEKLSEDVDSLLDEIDDVLEENAEE) forms a coiled coil. Positions 28-66 (NDASDLKERHEKLSEDVDSLLDEIDDVLEENAEEFVKGY) are ARC ATPase binding. Residues 31–41 (SDLKERHEKLS) are compositionally biased toward basic and acidic residues. E72 participates in a covalent cross-link: Isoglutamyl lysine isopeptide (Glu-Lys) (interchain with K-? in acceptor proteins).

This sequence belongs to the prokaryotic ubiquitin-like protein family. In terms of assembly, strongly interacts with the proteasome-associated ATPase ARC through a hydrophobic interface; the interacting region of Pup lies in its C-terminal half. There is one Pup binding site per ARC hexamer ring.

Its pathway is protein degradation; proteasomal Pup-dependent pathway. Functionally, protein modifier that is covalently attached to lysine residues of substrate proteins, thereby targeting them for proteasomal degradation. The tagging system is termed pupylation. This Frankia alni (strain DSM 45986 / CECT 9034 / ACN14a) protein is Prokaryotic ubiquitin-like protein Pup.